Reading from the N-terminus, the 246-residue chain is MKFVVFLCAIAAVVATIQGQEQQQQQQLPATIDHDQVKPFPQPQPVTISERAAMKFKPQLHVVDGCHPYPAVNDAGETGGGLKTTGSPTAGCKGSGWGSQVYGRSTWHRDVWAIMYSWYFPKDSPSTGLGHRHDWEHVIVWISNPDVPNPTILAVTPSAHSGYSKYAPPSADTVDGTSIKVRYESTYPMNHATDVTTEAGAFQDLIMWDQMTDAARNALNTVSFGDANVPMNDGNFVPKLDKAWPF.

Residues 1–19 (MKFVVFLCAIAAVVATIQG) form the signal peptide. The Conserved undecapeptide motif I signature appears at 113–123 (AIMYSWYFPKD). The Hepta-peptide GHRHDWE motif II signature appears at 130 to 136 (GHRHDWE).

The protein belongs to the Necrosis inducing protein (NPP1) family.

It localises to the secreted. Its function is as follows. Secreted effector that contributes strongly to virulence during infection by P.capsici. Causes large necrotic areas in both host C.annuum and non-host N.benthamiana. This chain is NLP effector protein 2, found in Phytophthora capsici.